The following is a 29-amino-acid chain: Dermaseptin-1 (29 aa).

Valine amide is present on V29.

In terms of tissue distribution, expressed by the skin glands.

The protein resides in the secreted. Its function is as follows. Antimicrobial peptide, active against the Gram-positive bacterium S.aureus, the Gram-negative bacteria E.coli and P.aeruginosa, and the yeasts C.albicans and P.brasiliensis. Has hemolytic activity (40% hemolysis at 128 ug/ml). This chain is Dermaseptin-1, found in Phyllomedusa tarsius (Brownbelly leaf frog).